The following is a 383-amino-acid chain: Izumo sperm-egg fusion protein 1 (383 aa).

Positions 1–21 (MGLHFTLLLAALANCLCPARL) are cleaved as a signal peptide. 5 disulfides stabilise this stretch: C22-C149, C25-C152, C135-C159, C139-C165, and C182-C233. The Extracellular portion of the chain corresponds to 22–306 (CIICDPFVVA…HRPEKKLKSR (285 aa)). The segment at 148 to 160 (WCNKCEKQMHFCR) is important for interaction with IZUMO1R. An Ig-like C2-type domain is found at 167–251 (ERQIEVHRLE…PATIIYYHVT (85 aa)). N204 carries an N-linked (GlcNAc...) asparagine glycan. The chain crosses the membrane as a helical span at residues 307 to 327 (LLILLILGFVVLVASVIASVL). At 328–383 (HFRKTRVKSKNSNVENKTSAAEFKSEAESPQKMGSRKLSQAEFHTDSSDKVEEADN) the chain is on the cytoplasmic side. Residues 335–383 (KSKNSNVENKTSAAEFKSEAESPQKMGSRKLSQAEFHTDSSDKVEEADN) are disordered. A compositionally biased stretch (polar residues) spans 337–346 (KNSNVENKTS). Phosphoserine occurs at positions 339, 346, and 366. Over residues 370–383 (FHTDSSDKVEEADN) the composition is skewed to basic and acidic residues. T372 is modified (phosphothreonine).

Belongs to the Izumo family. In terms of assembly, monomer, homodimer; disulfide-linked and homooligomer; depending on the context. Interacts with IZUMO1R/JUNO. IZUMO1 and IZUMO1R/JUNO form a complex with 1:1 stoichiometry. In gamete recognition, IZUMO1R/JUNO first binds to monomeric IZUMO1. The weak, but specific interaction with IZUMO1R/JUNO induces IZUMO1 homodimerization. The process follows a tight binding phase where IZUMO1 bends the entire structure towards the sperm membrane side through a thiol-disulfide exchange reaction. The molecule no longer binds to IZUMO1R/JUNO and instead binds to a putative second oocyte receptor. Interacts with ACE3. Part of a oolemmal binding multimeric complex (IZUMO1 complex) composed at least of IZUMO1 and GLIPR1L1; the complex assemblage is influenced by the maturation status of the male germ cell. Interacts with GLIPR1L1. Interacts with FREY; the interaction retains IZUMO1 at the endoplasmic reticulum membrane and coordinates IZUMO1 complex assembly. Interacts with WDR54. Forms a complex with SPACA6 and TMEM81 on spermatocyte cell membrane. In terms of processing, N-glycosylated. Glycosylation is not essential for fusion and for proper protein trafficking in sperm. Phosphorylated. The cytoplasmic C-terminus is phosphorylated and undergoes phosphorylation changes during epididymal transit. As to expression, expressed in sperm (at protein level).

The protein localises to the cell membrane. Its subcellular location is the cytoplasmic vesicle. The protein resides in the secretory vesicle. It localises to the acrosome membrane. In terms of biological role, essential sperm cell-surface protein required for fertilization by acting as a ligand for IZUMO1R/JUNO receptor on egg. The IZUMO1:IZUMO1R/JUNO interaction is a necessary adhesion event between sperm and egg that is required for fertilization but is not sufficient for cell fusion. The ligand-receptor interaction probably does not act as a membrane 'fusogen'. Plays a critical role in sperm-oolemma binding prior to plasma membrane fusion. Can mediate cell-cell fusion in cultured mammalian cells independently of its binding to IZUMO1R/JUNO. This chain is Izumo sperm-egg fusion protein 1, found in Rattus norvegicus (Rat).